A 237-amino-acid polypeptide reads, in one-letter code: Ribosomal RNA small subunit methyltransferase G (237 aa).

S-adenosyl-L-methionine contacts are provided by residues G72, L77, 123-124 (AE), and R138. The tract at residues 210 to 237 (TALETGTKAAPSRSPRKPGGRKKRGRKR) is disordered. Over residues 223–237 (SPRKPGGRKKRGRKR) the composition is skewed to basic residues.

Belongs to the methyltransferase superfamily. RNA methyltransferase RsmG family.

The protein localises to the cytoplasm. Functionally, specifically methylates the N7 position of guanine in position 518 of 16S rRNA. In Thermobifida fusca (strain YX), this protein is Ribosomal RNA small subunit methyltransferase G.